We begin with the raw amino-acid sequence, 55 residues long: Large ribosomal subunit protein bL33 (55 aa).

The protein belongs to the bacterial ribosomal protein bL33 family.

In Hamiltonella defensa subsp. Acyrthosiphon pisum (strain 5AT), this protein is Large ribosomal subunit protein bL33.